A 230-amino-acid chain; its full sequence is tRNA (guanine-N(7)-)-methyltransferase (230 aa).

The S-adenosyl-L-methionine site is built by E61, E86, N113, and D136. Residue D136 is part of the active site. Residues K140, D172, and 208-211 contribute to the substrate site; that span reads TKYE.

This sequence belongs to the class I-like SAM-binding methyltransferase superfamily. TrmB family.

It carries out the reaction guanosine(46) in tRNA + S-adenosyl-L-methionine = N(7)-methylguanosine(46) in tRNA + S-adenosyl-L-homocysteine. It participates in tRNA modification; N(7)-methylguanine-tRNA biosynthesis. In terms of biological role, catalyzes the formation of N(7)-methylguanine at position 46 (m7G46) in tRNA. This is tRNA (guanine-N(7)-)-methyltransferase from Mycobacterium leprae (strain Br4923).